A 480-amino-acid chain; its full sequence is Selenium-binding protein 3 (480 aa).

Cysteine 12 and cysteine 13 together coordinate selenite.

It belongs to the selenium-binding protein family. Expressed in young seedlings, mostly in roots.

This is Selenium-binding protein 3 (SBP3) from Arabidopsis thaliana (Mouse-ear cress).